The primary structure comprises 98 residues: Citrate lyase acyl carrier protein (98 aa).

Position 14 is an O-(phosphoribosyl dephospho-coenzyme A)serine (Ser14).

The protein belongs to the CitD family. Oligomer with a subunit composition of (alpha,beta,gamma)6.

It is found in the cytoplasm. In terms of biological role, covalent carrier of the coenzyme of citrate lyase. This chain is Citrate lyase acyl carrier protein, found in Shigella boydii serotype 4 (strain Sb227).